The primary structure comprises 86 residues: Alpha-toxin TbTx5 (86 aa).

The N-terminal stretch at 1-19 (MNDFVFLVVACLLTAGTEG) is a signal peptide. In terms of domain architecture, LCN-type CS-alpha/beta spans 21 to 82 (KDGYPVEGDN…EPTKTNGRCK (62 aa)). Intrachain disulfides connect C31–C81, C35–C57, C43–C64, and C47–C66. A Proline amide modification is found at P83.

The protein belongs to the long (4 C-C) scorpion toxin superfamily. Sodium channel inhibitor family. Alpha subfamily. In terms of tissue distribution, expressed by the venom gland.

The protein localises to the secreted. In terms of biological role, alpha toxins bind voltage-independently at site-3 of sodium channels (Nav) and inhibit the inactivation of the activated channels, thereby blocking neuronal transmission. This is Alpha-toxin TbTx5 from Tityus bahiensis (Brazilian scorpion).